A 130-amino-acid chain; its full sequence is Small ribosomal subunit protein uS9 (130 aa).

The protein belongs to the universal ribosomal protein uS9 family.

The protein is Small ribosomal subunit protein uS9 of Streptococcus pyogenes serotype M1.